The sequence spans 319 residues: Cytochrome c biogenesis protein CcsA (319 aa).

8 helical membrane-spanning segments follow: residues 9–29 (ILTHISFSIISIVITIFLISL), 48–68 (TFFCITGLLVTRWIYSGHFPL), 71–91 (LYESLIFLSWSFSVIHMVPYF), 98–118 (LSTITAPSTIFTQGFATSGLL), 143–163 (MILGYAALLCGSLLSVALLVI), 225–245 (IISLGFLFLTIGILSGAVWAN), 258–275 (ETWAFITWTLFAIYLHTR), and 286–306 (AIVASIGFLIIWICYFGVNLL).

The protein belongs to the CcmF/CycK/Ccl1/NrfE/CcsA family. May interact with Ccs1.

Its subcellular location is the plastid. It is found in the chloroplast thylakoid membrane. Required during biogenesis of c-type cytochromes (cytochrome c6 and cytochrome f) at the step of heme attachment. This Eucalyptus globulus subsp. globulus (Tasmanian blue gum) protein is Cytochrome c biogenesis protein CcsA.